The sequence spans 307 residues: tRNA dimethylallyltransferase (307 aa).

11–18 lines the ATP pocket; it reads GPTGSGKT. 13–18 is a binding site for substrate; the sequence is TGSGKT. The segment at 36–39 is interaction with substrate tRNA; the sequence is DSVA.

The protein belongs to the IPP transferase family. In terms of assembly, monomer. Mg(2+) serves as cofactor.

The catalysed reaction is adenosine(37) in tRNA + dimethylallyl diphosphate = N(6)-dimethylallyladenosine(37) in tRNA + diphosphate. Catalyzes the transfer of a dimethylallyl group onto the adenine at position 37 in tRNAs that read codons beginning with uridine, leading to the formation of N6-(dimethylallyl)adenosine (i(6)A). This is tRNA dimethylallyltransferase from Koribacter versatilis (strain Ellin345).